The following is a 405-amino-acid chain: NADH-quinone oxidoreductase subunit D (405 aa).

Belongs to the complex I 49 kDa subunit family. NDH-1 is composed of 14 different subunits. Subunits NuoB, C, D, E, F, and G constitute the peripheral sector of the complex.

The protein resides in the cell inner membrane. The catalysed reaction is a quinone + NADH + 5 H(+)(in) = a quinol + NAD(+) + 4 H(+)(out). Its function is as follows. NDH-1 shuttles electrons from NADH, via FMN and iron-sulfur (Fe-S) centers, to quinones in the respiratory chain. The immediate electron acceptor for the enzyme in this species is believed to be ubiquinone. Couples the redox reaction to proton translocation (for every two electrons transferred, four hydrogen ions are translocated across the cytoplasmic membrane), and thus conserves the redox energy in a proton gradient. The chain is NADH-quinone oxidoreductase subunit D from Afipia carboxidovorans (strain ATCC 49405 / DSM 1227 / KCTC 32145 / OM5) (Oligotropha carboxidovorans).